A 712-amino-acid chain; its full sequence is Polyribonucleotide nucleotidyltransferase (712 aa).

Residues Asp-487 and Asp-493 each contribute to the Mg(2+) site. One can recognise a KH domain in the interval 554 to 613 (PKIITMTINPDKIRDVIGPSGKQINKIIEETGVKIDIEQDGTVFISSINQEMNDKAKKII). An S1 motif domain is found at 623 to 691 (GEIYEGKVKR…KQGRVNLSRK (69 aa)).

This sequence belongs to the polyribonucleotide nucleotidyltransferase family. Requires Mg(2+) as cofactor.

The protein localises to the cytoplasm. The enzyme catalyses RNA(n+1) + phosphate = RNA(n) + a ribonucleoside 5'-diphosphate. Involved in mRNA degradation. Catalyzes the phosphorolysis of single-stranded polyribonucleotides processively in the 3'- to 5'-direction. The polypeptide is Polyribonucleotide nucleotidyltransferase (Bacillus cereus (strain 03BB102)).